Here is a 714-residue protein sequence, read N- to C-terminus: Fatty acid oxidation complex subunit alpha (714 aa).

The interval 1-190 is enoyl-CoA hydratase; the sequence is MEMASAFTLN…KLGLVDDVVP (190 aa). The interval 306-714 is 3-hydroxyacyl-CoA dehydrogenase; it reads APLNSVGILG…FWKTTATDLQ (409 aa).

The protein in the N-terminal section; belongs to the enoyl-CoA hydratase/isomerase family. This sequence in the central section; belongs to the 3-hydroxyacyl-CoA dehydrogenase family. As to quaternary structure, heterotetramer of two alpha chains (FadJ) and two beta chains (FadI).

It is found in the cytoplasm. The enzyme catalyses a (3S)-3-hydroxyacyl-CoA = a (2E)-enoyl-CoA + H2O. It carries out the reaction a 4-saturated-(3S)-3-hydroxyacyl-CoA = a (3E)-enoyl-CoA + H2O. The catalysed reaction is a (3S)-3-hydroxyacyl-CoA + NAD(+) = a 3-oxoacyl-CoA + NADH + H(+). It catalyses the reaction (3S)-3-hydroxybutanoyl-CoA = (3R)-3-hydroxybutanoyl-CoA. It functions in the pathway lipid metabolism; fatty acid beta-oxidation. In terms of biological role, catalyzes the formation of a hydroxyacyl-CoA by addition of water on enoyl-CoA. Also exhibits 3-hydroxyacyl-CoA epimerase and 3-hydroxyacyl-CoA dehydrogenase activities. The protein is Fatty acid oxidation complex subunit alpha of Escherichia coli O81 (strain ED1a).